The sequence spans 944 residues: Tyrosine-protein kinase transmembrane receptor ROR2 (944 aa).

Positions 1 to 33 (MARGWVRPSRVPLCARAVWTAAALLLWTPWTAG) are cleaved as a signal peptide. Residues 34–403 (EVEDSEAIDT…CSPRDGSKMG (370 aa)) are Extracellular-facing. Residues 55–145 (PTLKGYFLNF…VATNGLKTIT (91 aa)) enclose the Ig-like C2-type domain. N70 carries an N-linked (GlcNAc...) asparagine glycan. Cystine bridges form between C83–C135, C174–C239, C182–C232, C223–C264, C252–C300, C256–C286, C316–C394, C337–C377, and C365–C389. The 135-residue stretch at 169 to 303 (QEDGFCQPYR…SPDAANCMRI (135 aa)) folds into the FZ domain. N-linked (GlcNAc...) asparagine glycosylation occurs at N188. Residues 316 to 394 (CYNGSGADYR…RVELCDVPPC (79 aa)) form the Kringle domain. N-linked (GlcNAc...) asparagine glycosylation occurs at N318. Residues 404–424 (ILYILVPSIAIPLVIACLFFL) traverse the membrane as a helical segment. The Cytoplasmic segment spans residues 425 to 944 (VCMCRNKQKA…TEAAHVQLEA (520 aa)). The Protein kinase domain occupies 473–746 (VRFMEELGED…PRFKDIHSRL (274 aa)). ATP is bound by residues 479–487 (LGEDRFGKV) and K507. D615 (proton acceptor) is an active-site residue. Y646 bears the Phosphotyrosine; by autocatalysis mark. Residues 757-779 (SSAQTSGASNTTQTSSLSTSPVS) form a disordered region. Residues 765 to 779 (SNTTQTSSLSTSPVS) show a composition bias toward low complexity. An Asymmetric dimethylarginine modification is found at R785. 2 disordered regions span residues 850 to 879 (QVPP…TAPS) and 898 to 929 (QNIA…LGDN). Residues 857 to 872 (PKPSSHHSGSGSTSTG) show a composition bias toward low complexity.

It belongs to the protein kinase superfamily. Tyr protein kinase family. ROR subfamily. Homodimer; promotes osteogenesis. Binds YWHAB. Interacts with WTIP. Interacts with ROR2. Mg(2+) is required as a cofactor.

Its subcellular location is the cell membrane. The catalysed reaction is L-tyrosyl-[protein] + ATP = O-phospho-L-tyrosyl-[protein] + ADP + H(+). Functionally, tyrosine-protein kinase receptor which may be involved in the early formation of the chondrocytes. It seems to be required for cartilage and growth plate development. Phosphorylates YWHAB, leading to induction of osteogenesis and bone formation. In contrast, has also been shown to have very little tyrosine kinase activity in vitro. May act as a receptor for wnt ligand WNT5A which may result in the inhibition of WNT3A-mediated signaling. The protein is Tyrosine-protein kinase transmembrane receptor ROR2 (Ror2) of Mus musculus (Mouse).